Here is a 480-residue protein sequence, read N- to C-terminus: Flap endonuclease 1 (480 aa).

Residues 1-106 are N-domain; it reads MGIKGLTKFI…SELEKRGEKR (106 aa). Asp-34 is a Mg(2+) binding site. Residues Arg-47 and Arg-72 each coordinate DNA. The Mg(2+) site is built by Asp-88, Glu-160, Glu-162, Asp-181, and Asp-183. Residues 124–266 form an I-domain region; it reads EIKKQSGRTV…KTAYNLIKEY (143 aa). Glu-160 provides a ligand contact to DNA. The DNA site is built by Gly-244 and Asp-246. Asp-246 serves as a coordination point for Mg(2+). The interaction with PCNA stretch occupies residues 349–357; sequence TQRRLDTFF. The interval 379 to 461 is disordered; that stretch reads TKGKGKKREI…NIKNENVKED (83 aa). The segment covering 404 to 428 has biased composition (basic and acidic residues); the sequence is NVKDEKKNNEKVDELKNKSDENLVK. Residues 429–438 show a composition bias toward acidic residues; sequence DEEDDQDDYD.

The protein belongs to the XPG/RAD2 endonuclease family. FEN1 subfamily. As to quaternary structure, interacts with PCNA. Three molecules of FEN1 bind to one PCNA trimer with each molecule binding to one PCNA monomer. PCNA stimulates the nuclease activity without altering cleavage specificity. Mg(2+) serves as cofactor. In terms of processing, phosphorylated. Phosphorylation upon DNA damage induces relocalization to the nuclear plasma.

It is found in the nucleus. The protein localises to the nucleolus. The protein resides in the nucleoplasm. It localises to the mitochondrion. Inhibited by monovalent metal ions. Structure-specific nuclease with 5'-flap endonuclease and 5'-3' exonuclease activities involved in DNA replication and repair. During DNA replication, cleaves the 5'-overhanging flap structure that is generated by displacement synthesis when DNA polymerase encounters the 5'-end of a downstream Okazaki fragment. It enters the flap from the 5'-end and then tracks to cleave the flap base, leaving a nick for ligation. Also involved in the long patch base excision repair (LP-BER) pathway, by cleaving within the apurinic/apyrimidinic (AP) site-terminated flap. Acts as a genome stabilization factor that prevents flaps from equilibrating into structures that lead to duplications and deletions. Also possesses 5'-3' exonuclease activity on nicked or gapped double-stranded DNA, and exhibits RNase H activity. Also involved in replication and repair of rDNA and in repairing mitochondrial DNA. The polypeptide is Flap endonuclease 1 (Plasmodium yoelii yoelii).